The chain runs to 420 residues: Gamma-glutamyl phosphate reductase (420 aa).

This sequence belongs to the gamma-glutamyl phosphate reductase family.

It is found in the cytoplasm. It catalyses the reaction L-glutamate 5-semialdehyde + phosphate + NADP(+) = L-glutamyl 5-phosphate + NADPH + H(+). It participates in amino-acid biosynthesis; L-proline biosynthesis; L-glutamate 5-semialdehyde from L-glutamate: step 2/2. Catalyzes the NADPH-dependent reduction of L-glutamate 5-phosphate into L-glutamate 5-semialdehyde and phosphate. The product spontaneously undergoes cyclization to form 1-pyrroline-5-carboxylate. The sequence is that of Gamma-glutamyl phosphate reductase from Pasteurella multocida (strain Pm70).